Here is a 263-residue protein sequence, read N- to C-terminus: Isoprenyl transferase (263 aa).

D38 is an active-site residue. D38 lines the Mg(2+) pocket. Residues 39–42 (GNRR), H55, and 83–85 (STD) contribute to the substrate site. N86 (proton acceptor) is an active-site residue. Residues F87, R89, R212, and 218–220 (RLS) contribute to the substrate site. E231 serves as a coordination point for Mg(2+).

This sequence belongs to the UPP synthase family. Homodimer. Requires Mg(2+) as cofactor.

Its function is as follows. Catalyzes the condensation of isopentenyl diphosphate (IPP) with allylic pyrophosphates generating different type of terpenoids. This Thermus thermophilus (strain ATCC 27634 / DSM 579 / HB8) protein is Isoprenyl transferase.